The chain runs to 439 residues: Deacetylvindoline O-acetyltransferase (439 aa).

The active-site Proton acceptor is the H158. Positions 317 to 344 (TKLVINELRKEKQKIKNLSREKLTYVAQ) form a coiled coil. Residue D380 is the Proton acceptor of the active site.

It belongs to the plant acyltransferase family. Monomer. As to expression, predominantly expressed in young leaves of mature plants. Low expression in stems and flowers and not detected in roots. Confined to the laticifer and idioblast cells of leaves, stems, and flower buds.

Its subcellular location is the cytoplasm. It localises to the nucleus. The enzyme catalyses 4-O-deacetylvindoline + acetyl-CoA = vindoline + CoA. It participates in alkaloid biosynthesis; vindoline biosynthesis. Its function is as follows. Involved in the biosynthesis of vindoline, a precursor of vinblastine and vincristine. The sequence is that of Deacetylvindoline O-acetyltransferase from Catharanthus roseus (Madagascar periwinkle).